The sequence spans 298 residues: ADP/ATP translocase 1 (298 aa).

Residues 1 to 7 (MSDQALS) are Mitochondrial intermembrane-facing. Ser2 is subject to N-acetylserine. A Solcar 1 repeat occupies 6–98 (LSFLKDFLAG…FAFKDKYKQI (93 aa)). Residue Ser7 is modified to Phosphoserine. The chain crosses the membrane as a helical span at residues 8-37 (FLKDFLAGGVAAAVSKTAVAPIERVKLLLQ). Topologically, residues 38–74 (VQHASKQISAEKQYKGIIDCVVRIPKEQGFLSFWRGN) are mitochondrial matrix. At Lys52 the chain carries N6,N6,N6-trimethyllysine. A helical transmembrane segment spans residues 75 to 99 (LANVIRYFPTQALNFAFKDKYKQIF). Residues Arg80 and Lys92 each contribute to the ADP site. Residues 100 to 109 (LGGVDRHKQF) are Mitochondrial intermembrane-facing. A helical membrane pass occupies residues 110–130 (WRYFAGNLASGGAAGATSLCF). Solcar repeat units lie at residues 111–201 (RYFA…AKGM) and 212–297 (VSWM…IKKY). The Mitochondrial matrix segment spans residues 131 to 178 (VYPLDFARTRLAADVGKGAAQREFSGLGNCLTKIFKSDGLRGLYQGFN). Lys147 bears the N6-succinyllysine mark. At Cys160 the chain carries S-nitrosocysteine. A helical transmembrane segment spans residues 179-199 (VSVQGIIIYRAAYFGVYDTAK). The Mitochondrial intermembrane segment spans residues 200-210 (GMLPDPKNVHI). The helical transmembrane segment at 211 to 231 (IVSWMIAQTVTAVAGLVSYPF) threads the bilayer. The Mitochondrial matrix segment spans residues 232–273 (DTVRRRMMMQSGRKGADIMYTGTVDCWKKIAKDEGAKAFFKG). Arg235 serves as a coordination point for ADP. The segment at 235–240 (RRRMMM) is important for transport activity. The Nucleotide carrier signature motif motif lies at 235-240 (RRRMMM). An N6-succinyllysine mark is found at Lys245 and Lys272. Residues 274-291 (AWSNVLRGMGGAFVLVLY) form a helical membrane-spanning segment. The Mitochondrial intermembrane portion of the chain corresponds to 292 to 298 (DEIKKYV).

The protein belongs to the mitochondrial carrier (TC 2.A.29) family. Monomer. Found in a complex with ARL2, ARL2BP and SLC25A4/ANT1. Interacts with ARL2BP. Interacts with TIMM44; leading to inhibit the presequence translocase TIMM23, thereby promoting stabilization of PINK1. In terms of processing, under cell death induction, transglutaminated by TGM2. Transglutamination leads to formation of covalent cross-links between a glutamine and the epsilon-amino group of a lysine residue, forming polymers.

It is found in the mitochondrion inner membrane. Its subcellular location is the membrane. It catalyses the reaction ADP(in) + ATP(out) = ADP(out) + ATP(in). The catalysed reaction is H(+)(in) = H(+)(out). With respect to regulation, the matrix-open state (m-state) is inhibited by the membrane-permeable bongkrekic acid (BKA). The cytoplasmic-open state (c-state) is inhibited by the membrane-impermeable toxic inhibitor carboxyatractyloside (CATR). Proton transporter activity is inhibited by ADP:ATP antiporter activity. Its function is as follows. ADP:ATP antiporter that mediates import of ADP into the mitochondrial matrix for ATP synthesis, and export of ATP out to fuel the cell. Cycles between the cytoplasmic-open state (c-state) and the matrix-open state (m-state): operates by the alternating access mechanism with a single substrate-binding site intermittently exposed to either the cytosolic (c-state) or matrix (m-state) side of the inner mitochondrial membrane. In addition to its ADP:ATP antiporter activity, also involved in mitochondrial uncoupling and mitochondrial permeability transition pore (mPTP) activity. Plays a role in mitochondrial uncoupling by acting as a proton transporter: proton transport uncouples the proton flows via the electron transport chain and ATP synthase to reduce the efficiency of ATP production and cause mitochondrial thermogenesis. Proton transporter activity is inhibited by ADP:ATP antiporter activity, suggesting that SLC25A4/ANT1 acts as a master regulator of mitochondrial energy output by maintaining a delicate balance between ATP production (ADP:ATP antiporter activity) and thermogenesis (proton transporter activity). Proton transporter activity requires free fatty acids as cofactor, but does not transport it. Probably mediates mitochondrial uncoupling in tissues that do not express UCP1. Also plays a key role in mPTP opening, a non-specific pore that enables free passage of the mitochondrial membranes to solutes of up to 1.5 kDa, and which contributes to cell death. It is however unclear if SLC25A4/ANT1 constitutes a pore-forming component of mPTP or regulates it. Acts as a regulator of mitophagy independently of ADP:ATP antiporter activity: promotes mitophagy via interaction with TIMM44, leading to inhibit the presequence translocase TIMM23, thereby promoting stabilization of PINK1. This chain is ADP/ATP translocase 1, found in Oryctolagus cuniculus (Rabbit).